A 542-amino-acid chain; its full sequence is Cytochrome P450 monooxygenase 91 (542 aa).

Positions 1–22 (MLDILRFVLICGILWILRRVLL) are cleaved as a signal peptide. Residues N299 and N392 are each glycosylated (N-linked (GlcNAc...) asparagine). Heme is bound at residue C482.

This sequence belongs to the cytochrome P450 family. Requires heme as cofactor.

The protein operates within secondary metabolite biosynthesis. Its function is as follows. Cytochrome P450 monooxygenase that is able to use dehydroabietic acid as a substrate for oxidation. The protein is Cytochrome P450 monooxygenase 91 of Postia placenta (strain ATCC 44394 / Madison 698-R) (Brown rot fungus).